We begin with the raw amino-acid sequence, 95 residues long: UPF0235 protein Pcar_0617 (95 aa).

Belongs to the UPF0235 family.

The protein is UPF0235 protein Pcar_0617 of Syntrophotalea carbinolica (strain DSM 2380 / NBRC 103641 / GraBd1) (Pelobacter carbinolicus).